A 108-amino-acid chain; its full sequence is UPF0235 protein RB8260 (108 aa).

This sequence belongs to the UPF0235 family.

The sequence is that of UPF0235 protein RB8260 from Rhodopirellula baltica (strain DSM 10527 / NCIMB 13988 / SH1).